The chain runs to 265 residues: MSSTLSSHHAIALKASNLHLQLGGKTLLDNVDLEIMSGQITALLGPNGAGKSSLLKVLNGEIKPNSGSIEIFSRPKDHWPSELLAKHMGILPQHSTLSFSFLAHEVAELGAMPLAISNHQAQQLAAKNMVKVGVDHLANRLYPTLSGGEKQRVHFARVLTQLSHSGKQCILMLDEPTSALDLAHQHHTLEIAQALSQQGAAVIIVIHDLNLAAQYADRLIILNQGKIQADGTPWQVLTPTAVENVYGWPVQVIAHPEHNYPVILA.

One can recognise an ABC transporter domain in the interval 13-249 (LKASNLHLQL…TAVENVYGWP (237 aa)). Residue 45–52 (GPNGAGKS) participates in ATP binding.

The protein belongs to the ABC transporter superfamily. Heme (hemin) importer (TC 3.A.1.14.5) family. The complex is composed of two ATP-binding proteins (HmuV), two transmembrane proteins (HmuU) and a solute-binding protein (HmuT).

The protein resides in the cell inner membrane. Functionally, part of the ABC transporter complex HmuTUV involved in hemin import. Responsible for energy coupling to the transport system. The polypeptide is Hemin import ATP-binding protein HmuV (Photobacterium damselae subsp. damselae (Listonella damsela)).